The following is a 141-amino-acid chain: ATP synthase epsilon chain (141 aa).

Belongs to the ATPase epsilon chain family. As to quaternary structure, F-type ATPases have 2 components, CF(1) - the catalytic core - and CF(0) - the membrane proton channel. CF(1) has five subunits: alpha(3), beta(3), gamma(1), delta(1), epsilon(1). CF(0) has three main subunits: a, b and c.

The protein resides in the cell membrane. Its function is as follows. Produces ATP from ADP in the presence of a proton gradient across the membrane. The chain is ATP synthase epsilon chain from Lactococcus lactis subsp. lactis (strain IL1403) (Streptococcus lactis).